Consider the following 205-residue polypeptide: Proteasome subunit beta type-3 (205 aa).

Residue Ser-31 is modified to Phosphoserine. Lys-70 participates in a covalent cross-link: Glycyl lysine isopeptide (Lys-Gly) (interchain with G-Cter in ubiquitin).

This sequence belongs to the peptidase T1B family. The 26S proteasome consists of a 20S proteasome core and two 19S regulatory subunits. The 20S proteasome core is composed of 28 subunits that are arranged in four stacked rings, resulting in a barrel-shaped structure. The two end rings are each formed by seven alpha subunits, and the two central rings are each formed by seven beta subunits. The catalytic chamber with the active sites is on the inside of the barrel.

The protein localises to the cytoplasm. Its subcellular location is the nucleus. Functionally, non-catalytic component of the proteasome which degrades poly-ubiquitinated proteins in the cytoplasm and in the nucleus. It is essential for the regulated turnover of proteins and for the removal of misfolded proteins. The proteasome is a multicatalytic proteinase complex that is characterized by its ability to cleave peptides with Arg, Phe, Tyr, Leu, and Glu adjacent to the leaving group at neutral or slightly basic pH. It has an ATP-dependent proteolytic activity. This subunit may participate in the trypsin-like activity of the enzyme complex. The polypeptide is Proteasome subunit beta type-3 (PUP3) (Saccharomyces cerevisiae (strain ATCC 204508 / S288c) (Baker's yeast)).